The sequence spans 311 residues: Dihydroorotate dehydrogenase B (NAD(+)), catalytic subunit (311 aa).

FMN is bound by residues Ser-24 and 48–49 (KA). Substrate-binding positions include Lys-48 and 72 to 76 (NAIGL). FMN-binding residues include Asn-104 and Asn-132. Residue Asn-132 coordinates substrate. The Nucleophile role is filled by Cys-135. Residues Lys-170 and Ile-196 each contribute to the FMN site. A substrate-binding site is contributed by 197–198 (NT). Residues Gly-222, 248–249 (GG), and 270–271 (GT) contribute to the FMN site.

It belongs to the dihydroorotate dehydrogenase family. Type 1 subfamily. In terms of assembly, heterotetramer of 2 PyrK and 2 PyrD type B subunits. FMN is required as a cofactor.

It is found in the cytoplasm. The enzyme catalyses (S)-dihydroorotate + NAD(+) = orotate + NADH + H(+). Its pathway is pyrimidine metabolism; UMP biosynthesis via de novo pathway; orotate from (S)-dihydroorotate (NAD(+) route): step 1/1. Its function is as follows. Catalyzes the conversion of dihydroorotate to orotate with NAD(+) as electron acceptor. Cannot use fumarate as an electron acceptor. In Lactococcus lactis subsp. cremoris (strain MG1363), this protein is Dihydroorotate dehydrogenase B (NAD(+)), catalytic subunit (pyrDB).